The following is a 560-amino-acid chain: Zinc finger protein 619 (560 aa).

C2H2-type zinc fingers lie at residues Y188 to H210, Y216 to H238, Y244 to H266, Y272 to H294, F300 to H322, Y328 to H350, Y356 to H378, Y384 to H406, Y412 to H434, and Y440 to H462.

The protein belongs to the krueppel C2H2-type zinc-finger protein family.

The protein resides in the nucleus. In terms of biological role, may be involved in transcriptional regulation. The polypeptide is Zinc finger protein 619 (ZNF619) (Homo sapiens (Human)).